A 414-amino-acid chain; its full sequence is UDP-N-acetylmuramoylalanine--D-glutamate ligase (414 aa).

104–110 (GSNGKST) lines the ATP pocket.

The protein belongs to the MurCDEF family.

It localises to the cytoplasm. It carries out the reaction UDP-N-acetyl-alpha-D-muramoyl-L-alanine + D-glutamate + ATP = UDP-N-acetyl-alpha-D-muramoyl-L-alanyl-D-glutamate + ADP + phosphate + H(+). Its pathway is cell wall biogenesis; peptidoglycan biosynthesis. In terms of biological role, cell wall formation. Catalyzes the addition of glutamate to the nucleotide precursor UDP-N-acetylmuramoyl-L-alanine (UMA). This is UDP-N-acetylmuramoylalanine--D-glutamate ligase from Francisella philomiragia subsp. philomiragia (strain ATCC 25017 / CCUG 19701 / FSC 153 / O#319-036).